Reading from the N-terminus, the 318-residue chain is Taste receptor type 2 member 60 (318 aa).

At methionine 1 to valine 7 the chain is on the extracellular side. Residues leucine 8–arginine 28 traverse the membrane as a helical segment. Residues leucine 29–alanine 40 are Cytoplasmic-facing. Residues alanine 41–serine 61 form a helical membrane-spanning segment. Residues leucine 62–proline 88 lie on the Extracellular side of the membrane. Residues tyrosine 89–tryptophan 109 form a helical membrane-spanning segment. Over phenylalanine 110–proline 128 the chain is Cytoplasmic. The chain crosses the membrane as a helical span at residues valine 129–valine 149. Over glycine 150–asparagine 183 the chain is Extracellular. A glycan (N-linked (GlcNAc...) asparagine) is linked at asparagine 179. A helical membrane pass occupies residues serine 184–methionine 204. Residues proline 205 to phenylalanine 234 are Cytoplasmic-facing. The chain crosses the membrane as a helical span at residues arginine 235–leucine 255. The Extracellular segment spans residues phenylalanine 256 to valine 264. Residues phenylalanine 265 to isoleucine 285 form a helical membrane-spanning segment. The Cytoplasmic segment spans residues tyrosine 286–proline 318.

Belongs to the G-protein coupled receptor T2R family.

It is found in the membrane. Receptor that may play a role in the perception of bitterness and is gustducin-linked. May play a role in sensing the chemical composition of the gastrointestinal content. The activity of this receptor may stimulate alpha gustducin, mediate PLC-beta-2 activation and lead to the gating of TRPM5. This chain is Taste receptor type 2 member 60 (TAS2R60), found in Gorilla gorilla gorilla (Western lowland gorilla).